The primary structure comprises 487 residues: Wax ester synthase/diacylglycerol acyltransferase 3 (487 aa).

Residues 1 to 193 (MYTMKKGKDM…KHASSNKKSW (193 aa)) lie on the Cytoplasmic side of the membrane. Catalysis depends on His151, which acts as the Proton acceptor. A helical transmembrane segment spans residues 194-214 (WLVGRFWFMIRIIFTTVVELF). The Lumenal segment spans residues 215–487 (KYLLTLCFMR…MEKGVHKMEV (273 aa)).

It in the N-terminal section; belongs to the long-chain O-acyltransferase family. Mostly expressed in flowers and siliques.

Its subcellular location is the cell membrane. The protein localises to the endoplasmic reticulum membrane. It catalyses the reaction an acyl-CoA + a 1,2-diacyl-sn-glycerol = a triacyl-sn-glycerol + CoA. The catalysed reaction is a long chain fatty alcohol + a fatty acyl-CoA = a wax ester + CoA. It participates in glycerolipid metabolism; triacylglycerol biosynthesis. It functions in the pathway lipid metabolism. Its function is as follows. Bifunctional wax ester synthase/diacylglycerol acyltransferase. Involved in cuticular wax biosynthesis. This chain is Wax ester synthase/diacylglycerol acyltransferase 3, found in Arabidopsis thaliana (Mouse-ear cress).